The following is a 137-amino-acid chain: Ribosomal RNA small subunit methyltransferase G (137 aa).

Residues G75, F80, and 126–127 each bind S-adenosyl-L-methionine; that span reads AE.

The protein belongs to the methyltransferase superfamily. RNA methyltransferase RsmG family.

Its subcellular location is the cytoplasm. In terms of biological role, specifically methylates the N7 position of a guanine in 16S rRNA. This chain is Ribosomal RNA small subunit methyltransferase G, found in Mycoplasma mycoides subsp. mycoides SC (strain CCUG 32753 / NCTC 10114 / PG1).